Consider the following 888-residue polypeptide: Alanine--tRNA ligase (888 aa).

Positions 573, 577, 676, and 680 each coordinate Zn(2+).

Belongs to the class-II aminoacyl-tRNA synthetase family. Zn(2+) serves as cofactor.

It is found in the cytoplasm. It catalyses the reaction tRNA(Ala) + L-alanine + ATP = L-alanyl-tRNA(Ala) + AMP + diphosphate. Catalyzes the attachment of alanine to tRNA(Ala) in a two-step reaction: alanine is first activated by ATP to form Ala-AMP and then transferred to the acceptor end of tRNA(Ala). Also edits incorrectly charged Ser-tRNA(Ala) and Gly-tRNA(Ala) via its editing domain. The protein is Alanine--tRNA ligase of Corynebacterium diphtheriae (strain ATCC 700971 / NCTC 13129 / Biotype gravis).